Consider the following 1481-residue polypeptide: Cystic fibrosis transmembrane conductance regulator (1481 aa).

Residues 1–77 (MQRSPLEKAS…KLINALRRCF (77 aa)) are Cytoplasmic-facing. The chain crosses the membrane as a helical span at residues 78–98 (FWRFTFYGILLYLGEVTKAVQ). The ABC transmembrane type-1 1 domain maps to 81–365 (FTFYGILLYL…WAVQTWYDSL (285 aa)). Over 99-122 (PLLLGRIIASYDPDNKTERSIAIY) the chain is Extracellular. The chain crosses the membrane as a helical span at residues 123-146 (LGIGLCLLFIVRTLLLHPAIFGLH). The Cytoplasmic segment spans residues 147 to 195 (HIGMQMRIAMFSLIYKKTLKLSSRVLDKISIGQLVSLLSNNLNKFDEGL). A helical membrane pass occupies residues 196 to 216 (ALAHFVWIAPLQVALLMGLIW). Residues 217-222 (ELLQAS) lie on the Extracellular side of the membrane. The helical transmembrane segment at 223-243 (AFCGLGFLIVLALFQAGLGRM) threads the bilayer. Residues 244–298 (MMKYRDQRAGKINERLVITSEMIENIQSVKAYCWEEAMEKMIENLRQTELKLTRK) are Cytoplasmic-facing. Residues 299–319 (AAYVRYFNSSAFFFSGFFVVF) traverse the membrane as a helical segment. Over 320–339 (LSVLPYALIKGIILRKIFTT) the chain is Extracellular. A helical transmembrane segment spans residues 340-358 (ISFCIVLRMAVTRQFPWAV). Residues 359-858 (QTWYDSLGAI…YLRYITLHKS (500 aa)) are Cytoplasmic-facing. ATP contacts are provided by residues tryptophan 401, serine 434, 458–465 (GSTGAGKT), and glutamine 493. In terms of domain architecture, ABC transporter 1 spans 423 to 646 (NDDNNLFFSN…RPDFSSKLMG (224 aa)). Residue cysteine 524 is the site of S-palmitoyl cysteine attachment. 2 positions are modified to phosphoserine: serine 549 and serine 660. The disordered R region stretch occupies residues 654 to 831 (SSERRNSILT…EEINEEDLKE (178 aa)). Position 670 is a phosphoserine; by PKA (serine 670). Serine 686 bears the Phosphoserine mark. A Glycyl lysine isopeptide (Lys-Gly) (interchain with G-Cter in ubiquitin) cross-link involves residue lysine 688. Residues serine 700 and serine 712 each carry the phosphoserine modification. Threonine 717 is modified (phosphothreonine). 6 positions are modified to phosphoserine: serine 737, serine 753, serine 768, serine 790, serine 795, and serine 813. Residues 859 to 879 (LIFVLIWCLVIFLAEVAASLV) form a helical membrane-spanning segment. The region spanning 859 to 1155 (LIFVLIWCLV…AVNSSIDVDS (297 aa)) is the ABC transmembrane type-1 2 domain. At 880 to 918 (VLWLLRNTPFQDKGNSTYSRNNSYAVIITNTSSYYVFYI) the chain is on the extracellular side. 3 N-linked (GlcNAc...) asparagine glycosylation sites follow: asparagine 894, asparagine 900, and asparagine 909. Residues 919 to 939 (YVGVADTLLALGFFRGLPLVH) form a discontinuously helical membrane-spanning segment. Topologically, residues 940–990 (TLITVSKILHHKMLHSVLQAPMSTLNTLKAGGILNRFSKDIAILDDLLPLT) are cytoplasmic. Residues 991–1011 (IFDFIQLLLIVIGAIAVVSVL) traverse the membrane as a helical segment. Residues 1012 to 1013 (QP) lie on the Extracellular side of the membrane. A helical transmembrane segment spans residues 1014 to 1034 (YIFLATVPVIAAFVLLRAYFL). Over 1035–1095 (QTSQQLKQLE…TANWFLYLST (61 aa)) the chain is Cytoplasmic. The helical transmembrane segment at 1096–1116 (LRWFQMRIEMIFVIFFIAVTF) threads the bilayer. Residues 1117 to 1130 (ISILTTGEGEGTVG) lie on the Extracellular side of the membrane. Residues 1131–1151 (IILTLAMNIMSTLQWAVNSSI) form a helical membrane-spanning segment. Topologically, residues 1152 to 1481 (DVDSLMRSVS…TEEEVQETRL (330 aa)) are cytoplasmic. Positions 1211–1444 (MTIKDLTAKY…KSLFRQAISH (234 aa)) constitute an ABC transporter 2 domain. ATP contacts are provided by residues tyrosine 1220 and 1245-1252 (GRTGSGKS). An interaction with GORASP2 region spans residues 1387–1481 (RALKQAFADC…TEEEVQETRL (95 aa)). Cysteine 1396 carries S-palmitoyl cysteine lipidation. Residues serine 1445 and serine 1457 each carry the phosphoserine modification. The interval 1453-1481 (HRNSSKYKSRPQIASLKEETEEEVQETRL) is disordered. A compositionally biased stretch (acidic residues) spans 1471-1481 (ETEEEVQETRL). The short motif at 1479 to 1481 (TRL) is the PDZ-binding element.

It belongs to the ABC transporter superfamily. ABCC family. CFTR transporter (TC 3.A.1.202) subfamily. As to quaternary structure, monomer; does not require oligomerization for channel activity. May form oligomers in the membrane. Interacts with SLC26A3, SLC26A6 and NHERF1. Interacts with SHANK2. Interacts with MYO6. Interacts (via C-terminus) with GOPC (via PDZ domain); this promotes CFTR internalization and thereby decreases channel activity. Interacts with SLC4A7 through NHERF1. Found in a complex with MYO5B and RAB11A. Interacts with ANO1. Interacts with SLC26A8. Interacts with AHCYL1; the interaction increases CFTR activity. Interacts with CSE1L. The core-glycosylated form interacts with GORASP2 (via PDZ GRASP-type 1 domain) in respone to ER stress. Interacts with MARCHF2; the interaction leads to CFTR ubiqtuitination and degradation. Interacts with ADGRG2. In terms of processing, N-glycosylated. Phosphorylated; cAMP treatment promotes phosphorylation and activates the channel. Dephosphorylation decreases the ATPase activity (in vitro). Phosphorylation at PKA sites activates the channel. Phosphorylation at PKC sites enhances the response to phosphorylation by PKA. Phosphorylated by AMPK; this inhibits channel activity. Post-translationally, ubiquitinated, leading to its degradation in the lysosome. Deubiquitination by USP10 in early endosomes enhances its endocytic recycling to the cell membrane. Ubiquitinated by RNF185 during ER stress. Ubiquitinated by MARCHF2.

It is found in the apical cell membrane. The protein resides in the early endosome membrane. The protein localises to the cell membrane. Its subcellular location is the recycling endosome membrane. It localises to the endoplasmic reticulum membrane. It is found in the nucleus. It carries out the reaction ATP + H2O + closed Cl(-) channel = ADP + phosphate + open Cl(-) channel.. The enzyme catalyses chloride(in) = chloride(out). It catalyses the reaction hydrogencarbonate(in) = hydrogencarbonate(out). The catalysed reaction is ATP + H2O = ADP + phosphate + H(+). Functionally, epithelial ion channel that plays an important role in the regulation of epithelial ion and water transport and fluid homeostasis. Mediates the transport of chloride ions across the cell membrane. Possesses an intrinsic ATPase activity and utilizes ATP to gate its channel; the passive flow of anions through the channel is gated by cycles of ATP binding and hydrolysis by the ATP-binding domains. The ion channel is also permeable to HCO(3)(-); selectivity depends on the extracellular chloride concentration. Exerts its function also by modulating the activity of other ion channels and transporters. Contributes to the regulation of the pH and the ion content of the epithelial fluid layer. Modulates the activity of the epithelial sodium channel (ENaC) complex, in part by regulating the cell surface expression of the ENaC complex. May regulate bicarbonate secretion and salvage in epithelial cells by regulating the transporter SLC4A7. Can inhibit the chloride channel activity of ANO1. Plays a role in the chloride and bicarbonate homeostasis during sperm epididymal maturation and capacitation. The polypeptide is Cystic fibrosis transmembrane conductance regulator (Callithrix jacchus (White-tufted-ear marmoset)).